A 144-amino-acid chain; its full sequence is Large ribosomal subunit protein uL16 (144 aa).

Belongs to the universal ribosomal protein uL16 family. Part of the 50S ribosomal subunit.

Its function is as follows. Binds 23S rRNA and is also seen to make contacts with the A and possibly P site tRNAs. The polypeptide is Large ribosomal subunit protein uL16 (Bacillus cereus (strain ATCC 10987 / NRS 248)).